The following is a 201-amino-acid chain: MGNVMEGKSVEELSSTECHQWYKKFMTECPSGQLTLYEFRQFFGLKNLSPSASQYVEQMFETFDFNKDGYIDFMEYVAALSLVLKGKVEQKLRWYFKLYDVDGNGCIDRDELLTIIQAIRAINPCSDTTMTAEEFTDTVFSKIDVNGDGELSLEEFIEGVQKDQMLLDTLTRSLDLTRIVRRLQNGEQDEEGADEAAEAAG.

Gly-2 carries N-myristoyl glycine lipidation. Residue Asn-3 is modified to Deamidated asparagine. EF-hand domains lie at Ser-31–Ser-49, Ser-51–Gly-86, Lys-87–Ile-122, and Thr-131–Leu-166. Residues Asp-64, Asn-66, Asp-68, Tyr-70, Glu-75, Asp-100, Asp-102, Asn-104, Cys-106, Glu-111, Asp-144, Asn-146, Asp-148, Glu-150, and Glu-155 each contribute to the Ca(2+) site.

Homodimer. In terms of tissue distribution, in the retina, it is expressed in rod and cone photoreceptors.

The protein resides in the membrane. It localises to the photoreceptor inner segment. It is found in the cell projection. The protein localises to the cilium. Its subcellular location is the photoreceptor outer segment. Stimulates retinal guanylyl cyclase when free calcium ions concentration is low and inhibits guanylyl cyclase when free calcium ions concentration is elevated. This Ca(2+)-sensitive regulation of retinal guanylyl cyclase is a key event in recovery of the dark state of rod photoreceptors following light exposure. May be involved in cone photoreceptor light response and recovery of response in bright light. In Homo sapiens (Human), this protein is Guanylyl cyclase-activating protein 1 (GUCA1A).